Here is a 374-residue protein sequence, read N- to C-terminus: 2-oxoglutarate-Fe(II) type oxidoreductase ppzC (374 aa).

The segment at 111-131 (KKGPFDSGYRGPGTQRVNPDE) is disordered. One can recognise a Fe2OG dioxygenase domain in the interval 220-330 (YPDASLEINF…RVSMPFFWGF (111 aa)). Fe cation-binding residues include His254, Asp256, and His311. A 2-oxoglutarate-binding site is contributed by Arg321.

It belongs to the iron/ascorbate-dependent oxidoreductase family. Fe(2+) serves as cofactor.

It catalyses the reaction peramine + 2-oxoglutarate + O2 = 8-hydroxyperamine + succinate + CO2. Its pathway is secondary metabolite biosynthesis. Its function is as follows. 2-oxoglutarate-Fe(II) type oxidoreductase; part of the gene cluster that mediates the biosynthesis of pyrrolopyrazines, secondary metabolites showing insecticidal activity. Within the pathway, ppzC uses peramine as substrate for hydroxylation to yield the novel analog 8-hydroxyperamine. The single multifunctional NRPS ppzA is sufficient to produce peramine via condensation of 1-pyrroline-5-carboxylate and arginine, N-methylation of the alpha-amino group of arginine and reduction of the thioester and the cyclization to form an iminium ion resulting in release from the peptide synthetase. Deprotonation of this intermediate and oxidation of the pyrroline ring would give rise to peramine. In Epichloe species that produce only peramine, the peramine synthetase gene is not localized in a gene cluster, in contrast to Metarhizium species that contain additional pyrrolopyrazine biosynthesis genes. The 2-oxoglutarate-Fe(II) type oxidoreductase ppzC hydroxylates peramine to yield the newly identified compound 8-hydroxyperamine whereas ppzD converts L-proline into trans-4-hydroxy-L-proline, a precursor of peramine biosynthesis. The chain is 2-oxoglutarate-Fe(II) type oxidoreductase ppzC (ppzC) from Metarhizium majus (strain ARSEF 297).